The primary structure comprises 1175 residues: Atrophin-1 (1175 aa).

3 disordered regions span residues M1–S595, S608–N752, and V770–P847. The Nuclear localization signal motif lies at R16–R32. The span at K17–S29 shows a compositional bias: basic and acidic residues. Phosphoserine is present on S34. Over residues G45–S63 the composition is skewed to basic and acidic residues. Phosphoserine is present on residues S77, S79, S101, S103, and S107. Positions L108–N128 are enriched in basic and acidic residues. Over residues R129 to S152 the composition is skewed to polar residues. Pro residues-rich tracts occupy residues P158 to S174 and G208 to H217. 2 stretches are compositionally biased toward low complexity: residues G240 to K253 and I262 to P273. The span at P345–R374 shows a compositional bias: pro residues. Over residues S378–S396 the composition is skewed to low complexity. Positions S416–W437 are enriched in polar residues. Over residues T476–G491 the composition is skewed to basic residues. An involved in binding BAIAP2 region spans residues H503–P553. The segment covering P527–H539 has biased composition (pro residues). The span at A547–Y584 shows a compositional bias: low complexity. S617 bears the Phosphoserine mark. The residue at position 626 (K626) is an N6-acetyllysine. T638 carries the phosphothreonine modification. S646 carries the phosphoserine modification. Phosphothreonine is present on T654. Composition is skewed to pro residues over residues L693–G703 and P722–K737. S724 is modified (phosphoserine; by MAPK8). Phosphoserine occurs at positions 731 and 733. A compositionally biased stretch (basic and acidic residues) spans K780–V824. The segment at D864–V879 is required for interaction with FAT1. Position 881 is a phosphoserine (S881). The segment at P913–K932 is disordered. Basic and acidic residues predominate over residues A914–K932. The Nuclear export signal signature appears at A1018–R1026. R1100 carries the asymmetric dimethylarginine modification. K1168 is covalently cross-linked (Glycyl lysine isopeptide (Lys-Gly) (interchain with G-Cter in SUMO2)).

Interacts with BAIAP2, WWP1, WWP2, WWP3 and RERE. Interacts (via its N-terminus) with MTG8; the interaction enhances transcriptional repression of MTG8. Interacts with PQBP1. Interacts with NR2E1; the interaction represses the transcriptional activity of NR2E1. Interacts with FAT1 (via a C-terminal domain). In terms of processing, phosphorylated in vitro by MAPK8/JNK1 on Ser-724. Widely expressed. Most abundant in the brain.

It is found in the cytoplasm. The protein resides in the perinuclear region. Its subcellular location is the cell junction. The protein localises to the nucleus. Functionally, transcriptional corepressor. Corepressor of MTG8 transcriptional repression. Has some intrinsic repression activity which is independent of the number of the poly-Q repeats. Recruits NR2E1 to repress transcription. Promotes vascular smooth cell (VSMC) migration and orientation. This chain is Atrophin-1 (Atn1), found in Mus musculus (Mouse).